We begin with the raw amino-acid sequence, 128 residues long: Fluoride-specific ion channel FluC (128 aa).

The next 4 membrane-spanning stretches (helical) occupy residues 2 to 22 (FYSIVAIFVGAGLGALLRWCL), 35 to 55 (LGTLAANLLGGYVIGVAAVVF), 67 to 87 (LFVITGFLGGLTTFSTYSVEV), and 96 to 116 (FGWALAVAALHLTGSFALTAL). Na(+)-binding residues include Gly75 and Thr78.

It belongs to the fluoride channel Fluc/FEX (TC 1.A.43) family.

It is found in the cell inner membrane. The catalysed reaction is fluoride(in) = fluoride(out). With respect to regulation, na(+) is not transported, but it plays an essential structural role and its presence is essential for fluoride channel function. Its function is as follows. Fluoride-specific ion channel. Important for reducing fluoride concentration in the cell, thus reducing its toxicity. The protein is Fluoride-specific ion channel FluC of Burkholderia cenocepacia (strain ATCC BAA-245 / DSM 16553 / LMG 16656 / NCTC 13227 / J2315 / CF5610) (Burkholderia cepacia (strain J2315)).